Here is a 181-residue protein sequence, read N- to C-terminus: ATP synthase subunit b 2 (181 aa).

Positions 1-12 (MAEGHGTTAHTG) are enriched in low complexity. A disordered region spans residues 1-20 (MAEGHGTTAHTGAEGGHKAP). The chain crosses the membrane as a helical span at residues 33–53 (LVSLLIAFVALYLIVSKVALP).

This sequence belongs to the ATPase B chain family. F-type ATPases have 2 components, F(1) - the catalytic core - and F(0) - the membrane proton channel. F(1) has five subunits: alpha(3), beta(3), gamma(1), delta(1), epsilon(1). F(0) has three main subunits: a(1), b(2) and c(10-14). The alpha and beta chains form an alternating ring which encloses part of the gamma chain. F(1) is attached to F(0) by a central stalk formed by the gamma and epsilon chains, while a peripheral stalk is formed by the delta and b chains.

The protein localises to the cell inner membrane. Functionally, f(1)F(0) ATP synthase produces ATP from ADP in the presence of a proton or sodium gradient. F-type ATPases consist of two structural domains, F(1) containing the extramembraneous catalytic core and F(0) containing the membrane proton channel, linked together by a central stalk and a peripheral stalk. During catalysis, ATP synthesis in the catalytic domain of F(1) is coupled via a rotary mechanism of the central stalk subunits to proton translocation. Component of the F(0) channel, it forms part of the peripheral stalk, linking F(1) to F(0). The b'-subunit is a diverged and duplicated form of b found in plants and photosynthetic bacteria. The protein is ATP synthase subunit b 2 (atpF2) of Rhodopseudomonas palustris (strain BisA53).